We begin with the raw amino-acid sequence, 490 residues long: Pre-glycoprotein polyprotein GP complex (490 aa).

The N-myristoyl glycine; by host moiety is linked to residue Gly2. The Extracellular segment spans residues 2-17 (GQIVTFFQEVPHVIEE). A helical membrane pass occupies residues 18–33 (VMNIVLIALSILAILK). Over 34 to 58 (GLYNVATCGLIGLVTFLLLSGRSCS) the chain is Cytoplasmic. Cys57 lines the Zn(2+) pocket. The Extracellular portion of the chain corresponds to 59–431 (LIYKGTYELQ…QGKTPLGLVD (373 aa)). Residues Asn78, Asn88, Asn98, Asn108, Asn118, and Asn166 are each glycosylated (N-linked (GlcNAc...) asparagine; by host). Intrachain disulfides connect Cys85-Cys230, Cys117-Cys154, Cys179-Cys211, Cys278-Cys291, Cys300-Cys309, and Cys363-Cys384. An N-linked (GlcNAc...) asparagine; by host glycan is attached at Asn223. Residues Asn364, Asn372, Asn389, and Asn394 are each glycosylated (N-linked (GlcNAc...) asparagine; by host). Residues 432–452 (LFVFSTSFYLISIFLHLVKIP) traverse the membrane as a helical segment. The Cytoplasmic segment spans residues 453 to 490 (THRHIVGKPCPKPHRLNHMGICSCGLYKQPGVPVRWKR). Positions 454, 456, 462, 466, 474, and 476 each coordinate Zn(2+).

Belongs to the arenaviridae GPC protein family. In terms of assembly, interacts with glycoprotein G2. Part of the GP complex (GP-C) together with glycoprotein G1 and glycoprotein G2. The GP-complex interacts with protein Z, which interacts with ribonucleocapsid; these interactions may induce virion budding. Homotrimer; disulfide-linked. In pre-fusion state, G1 homotrimers bind G2 homotrimers via ionic interactions. Part of the GP complex (GP-C) together with glycoprotein G2 and the stable signal peptide. Interacts with the primary host receptor DAG1 on the cell surface; this interaction occurs at pH 8.0 but not at pH 6.0 and below. Upon virus internalization and at endosomal pH, interacts with the host lysosomal protein LAMP1; this interaction mediates G1 dissociation from GP-C and membrane fusion. The GP-complex interacts with protein Z, which interacts with ribonucleocapsid; these interactions may induce virion budding. As to quaternary structure, homotrimer. Interacts with the stable signal peptide. In pre-fusion state, G2 homotrimers bind G1 homotrimers via ionic interactions. Part of the GP complex (GP-C) together with glycoprotein G1 and the stable signal peptide. Acidification in the endosome triggers rearrangements, which ultimately leads to a 6 helix bundle formed by the two heptad repeat domains (HR1 and HR2) in post-fusion state. The GP-complex interacts with protein Z, which interacts with ribonucleocapsid; these interactions may induce virion budding. In terms of processing, specific enzymatic cleavages in vivo yield mature proteins. GP-C polyprotein is cleaved in the endoplasmic reticulum by the host protease MBTPS1. Only cleaved glycoprotein is incorporated into virions. The SSP remains stably associated with the GP complex following cleavage by signal peptidase and plays crucial roles in the trafficking of GP through the secretory pathway. Post-translationally, myristoylation is necessary for GP2-mediated fusion activity.

Its subcellular location is the virion membrane. It is found in the host endoplasmic reticulum membrane. The protein localises to the host Golgi apparatus membrane. It localises to the host cell membrane. In terms of biological role, functions as a cleaved signal peptide that is retained as the third component of the GP complex (GP-C). Helps to stabilize the spike complex in its native conformation. The SSP is required for efficient glycoprotein expression, post-translational maturation cleavage of G1 and G2, glycoprotein transport to the cell surface plasma membrane, formation of infectious virus particles, and acid pH-dependent glycoprotein-mediated cell fusion. Its function is as follows. Forms the virion spikes together with glycoprotein G2. The glycoprotein spike trimers are connected to the underlying matrix. Interacts with the host receptor. Mediates virus attachment to the host primary receptor alpha-dystroglycan DAG1 (alpha-DG) at the cell surface. This attachment induces virion internalization apparently through macropinocytosis. Following endocytosis, there is a pH-dependent switch from binding DAG1 to the host lysosomal receptor LAMP1. This latter binding triggers the dissociation of GP1, exposing the fusion subunit, GP2, such that fusion can occur. Down-modulates host DAG1. Functionally, forms the virion spikes together with glycoprotein G1. The glycoprotein spike trimers are connected to the underlying matrix. Class I viral fusion protein that directs fusion of viral and host endosomal membranes, leading to delivery of the nucleocapsid into the cytoplasm. Membrane fusion is mediated by irreversible conformational changes induced by acidification. The polypeptide is Pre-glycoprotein polyprotein GP complex (Lassa virus (strain GA391) (LASV)).